A 219-amino-acid polypeptide reads, in one-letter code: Small ribosomal subunit protein uS3 (219 aa).

Positions 38 to 106 (IREYIENRLK…RVHINIFEVK (69 aa)) constitute a KH type-2 domain.

This sequence belongs to the universal ribosomal protein uS3 family. Part of the 30S ribosomal subunit. Forms a tight complex with proteins S10 and S14.

In terms of biological role, binds the lower part of the 30S subunit head. Binds mRNA in the 70S ribosome, positioning it for translation. The sequence is that of Small ribosomal subunit protein uS3 from Halalkalibacterium halodurans (strain ATCC BAA-125 / DSM 18197 / FERM 7344 / JCM 9153 / C-125) (Bacillus halodurans).